Consider the following 762-residue polypeptide: MALHTSNLGYPRIGLQREWKKTLEAFWAQKIDEQQLITTMKEIHLEHLNVQKEKGIDFIPIGDFTYYDHVLDTAYMLGFIPSRFSNFTSYLDIYFAMARGSKDHVASEMTKWFNTNYHYIVPEYEEGLNISLKDNRPLRLYEEAKRELGIDGKPVILGPYTFLKLAKGYTQDQFPTILHKLIAPYVQLLTELHKAGARLIQIDEPIFVSLTKEEMIEAKKLYEAIQKEVPSANLILQTYFDSVEENYTELITFPVSGIGLDFVHGKEGNIKSIVEHGFPAEKTLAIGCIDGRNIWRANLDEVFALFETLKAHIEPKDWIIQPSCSLLHTPVDKTEETHLSPELFDALAFANQKLEELTLIKRGLSEGVNSIEIEITTYRNSHEAVRSSAARNRKDVQTARASLKEEDFSRPLPFEQRYDLQQKALQLPLLPTTTIGSFPQTPEVRQTRKQWRNGEITNEQYEHFIEQETEKWIRHQENIGLDVLVHGEFERTDMVEYFGERLAGFSFTKNGWVQSYGSRCVKPPIIFGDVAFISDMTVKETVYAQSLTNKVVKGMLTGPVTILNWSFVRNDLPRKEVCYQIALALRHEIERLESSGIRIIQVDEPALREGMPLKEKDWDSYIEWAVQSFRLATASVANETQIHTHMCYSNFEDIVDAIRALDADVISIETSRSHGEFIHTLEQTTYEKGIGLGVYDIHSPRVPSKEEMYTIVEQSLKVCNPKYFWINPDCGLKTRRTEEVLPALEHMVEAAKEARTLLKTNA.

5-methyltetrahydropteroyltri-L-glutamate contacts are provided by residues 17–20 (REWK) and Lys-111. L-homocysteine contacts are provided by residues 435–437 (IGS) and Glu-488. L-methionine-binding positions include 435–437 (IGS) and Glu-488. Residues 519–520 (RC) and Trp-565 each bind 5-methyltetrahydropteroyltri-L-glutamate. Asp-603 contacts L-homocysteine. Asp-603 serves as a coordination point for L-methionine. Glu-609 serves as a coordination point for 5-methyltetrahydropteroyltri-L-glutamate. Residues His-645, Cys-647, and Glu-669 each coordinate Zn(2+). Catalysis depends on His-698, which acts as the Proton donor. Position 730 (Cys-730) interacts with Zn(2+).

The protein belongs to the vitamin-B12 independent methionine synthase family. It depends on Zn(2+) as a cofactor.

It carries out the reaction 5-methyltetrahydropteroyltri-L-glutamate + L-homocysteine = tetrahydropteroyltri-L-glutamate + L-methionine. The protein operates within amino-acid biosynthesis; L-methionine biosynthesis via de novo pathway; L-methionine from L-homocysteine (MetE route): step 1/1. In terms of biological role, catalyzes the transfer of a methyl group from 5-methyltetrahydrofolate to homocysteine resulting in methionine formation. The protein is 5-methyltetrahydropteroyltriglutamate--homocysteine methyltransferase of Bacillus cytotoxicus (strain DSM 22905 / CIP 110041 / 391-98 / NVH 391-98).